We begin with the raw amino-acid sequence, 434 residues long: Protein FAM83A (434 aa).

Residues 1–298 (MSRSRHLGKI…LYASSKPVMG (298 aa)) are DUF1669. Residues 76–97 (REPPCPPDTLGGAEAGPKGLDS) form a disordered region. S301, S327, S348, and S357 each carry phosphoserine. The interval 308–399 (VPPGAAPANG…HDGPPAAVYS (92 aa)) is disordered. Composition is skewed to low complexity over residues 320–332 (SSSS…RTSS) and 348–357 (SVSASSGPCS). Pro residues predominate over residues 358–369 (PAAPHPPPPPRF).

It belongs to the FAM83 family. In terms of assembly, directly interacts (via DUF1669) with casein kinase isoforms CSNK1A1, CSNK1A1L, CSNK1D and CSNK1E. Phosphorylated upon EGFR activation in a breast cancer cell line.

It localises to the cytoplasm. Involved in mitochondrial maintenance during adipogenesis. May be acting by playing a role in the maintenance of normal mitochondrial function. This chain is Protein FAM83A, found in Homo sapiens (Human).